We begin with the raw amino-acid sequence, 217 residues long: D-methionine transport system permease protein MetI (217 aa).

Residues 1–19 (MSEAMMWLLVRGVWETLAM) are Periplasmic-facing. In terms of domain architecture, ABC transmembrane type-1 spans 13–204 (VWETLAMTFV…LLVVLVYLIQ (192 aa)). A helical transmembrane segment spans residues 20-40 (TFVSGFFGFVIGLPVGVLLYV). Topologically, residues 41–54 (TRPGQIMENARLYR) are cytoplasmic. A helical membrane pass occupies residues 55–77 (SLSAVVNIFRSIPFIILLVWMIP). Residues 78–92 (FTRIIVGTSIGLQAA) lie on the Periplasmic side of the membrane. The helical transmembrane segment at 93-113 (IVPLTVGAAPFIARMVENALL) threads the bilayer. At 114–151 (EIPAGLIEASRAMGATPLQIVRKILLPEALPGLVNAAT) the chain is on the cytoplasmic side. A helical transmembrane segment spans residues 152–172 (ITLITLVGYSAMGGAVGAGGL). Residues 173–185 (GQIGYQYGYIGYN) lie on the Periplasmic side of the membrane. A helical transmembrane segment spans residues 186-206 (ATVMNTVLVLLVVLVYLIQLS). Topologically, residues 207 to 217 (GDRIVRAVTHK) are cytoplasmic.

The protein belongs to the binding-protein-dependent transport system permease family. CysTW subfamily.

The protein resides in the cell inner membrane. Functionally, part of the binding-protein-dependent transport system for D-methionine and the toxic methionine analog alpha-methyl-methionine. Probably responsible for the translocation of the substrate across the membrane. This Salmonella typhimurium (strain LT2 / SGSC1412 / ATCC 700720) protein is D-methionine transport system permease protein MetI (metI).